Here is a 426-residue protein sequence, read N- to C-terminus: Probable glucose-6-phosphate isomerase (426 aa).

Catalysis depends on E272, which acts as the Proton donor. Catalysis depends on residues H293 and K404.

Belongs to the GPI family.

Its subcellular location is the cytoplasm. It carries out the reaction alpha-D-glucose 6-phosphate = beta-D-fructose 6-phosphate. Its pathway is carbohydrate biosynthesis; gluconeogenesis. It functions in the pathway carbohydrate degradation; glycolysis; D-glyceraldehyde 3-phosphate and glycerone phosphate from D-glucose: step 2/4. Its function is as follows. Catalyzes the reversible isomerization of glucose-6-phosphate to fructose-6-phosphate. This Halobacterium salinarum (strain ATCC 700922 / JCM 11081 / NRC-1) (Halobacterium halobium) protein is Probable glucose-6-phosphate isomerase.